A 270-amino-acid chain; its full sequence is Putative postmeiotic segregation increased 2-like protein 11 (270 aa).

It belongs to the DNA mismatch repair MutL/HexB family.

The chain is Putative postmeiotic segregation increased 2-like protein 11 (PMS2P11) from Homo sapiens (Human).